We begin with the raw amino-acid sequence, 290 residues long: 4-hydroxy-3-methylbut-2-enyl diphosphate reductase (290 aa).

Cysteine 13 contacts [4Fe-4S] cluster. (2E)-4-hydroxy-3-methylbut-2-enyl diphosphate contacts are provided by histidine 41 and histidine 75. Residues histidine 41 and histidine 75 each coordinate dimethylallyl diphosphate. Isopentenyl diphosphate contacts are provided by histidine 41 and histidine 75. Position 97 (cysteine 97) interacts with [4Fe-4S] cluster. Histidine 129 lines the (2E)-4-hydroxy-3-methylbut-2-enyl diphosphate pocket. Histidine 129 contacts dimethylallyl diphosphate. Residue histidine 129 coordinates isopentenyl diphosphate. Residue glutamate 131 is the Proton donor of the active site. Threonine 167 lines the (2E)-4-hydroxy-3-methylbut-2-enyl diphosphate pocket. Cysteine 198 serves as a coordination point for [4Fe-4S] cluster. (2E)-4-hydroxy-3-methylbut-2-enyl diphosphate-binding residues include serine 226, serine 227, asparagine 228, and serine 270. The dimethylallyl diphosphate site is built by serine 226, serine 227, asparagine 228, and serine 270. Isopentenyl diphosphate-binding residues include serine 226, serine 227, asparagine 228, and serine 270.

The protein belongs to the IspH family. It depends on [4Fe-4S] cluster as a cofactor.

The catalysed reaction is isopentenyl diphosphate + 2 oxidized [2Fe-2S]-[ferredoxin] + H2O = (2E)-4-hydroxy-3-methylbut-2-enyl diphosphate + 2 reduced [2Fe-2S]-[ferredoxin] + 2 H(+). It carries out the reaction dimethylallyl diphosphate + 2 oxidized [2Fe-2S]-[ferredoxin] + H2O = (2E)-4-hydroxy-3-methylbut-2-enyl diphosphate + 2 reduced [2Fe-2S]-[ferredoxin] + 2 H(+). Its pathway is isoprenoid biosynthesis; dimethylallyl diphosphate biosynthesis; dimethylallyl diphosphate from (2E)-4-hydroxy-3-methylbutenyl diphosphate: step 1/1. It functions in the pathway isoprenoid biosynthesis; isopentenyl diphosphate biosynthesis via DXP pathway; isopentenyl diphosphate from 1-deoxy-D-xylulose 5-phosphate: step 6/6. Its function is as follows. Catalyzes the conversion of 1-hydroxy-2-methyl-2-(E)-butenyl 4-diphosphate (HMBPP) into a mixture of isopentenyl diphosphate (IPP) and dimethylallyl diphosphate (DMAPP). Acts in the terminal step of the DOXP/MEP pathway for isoprenoid precursor biosynthesis. This is 4-hydroxy-3-methylbut-2-enyl diphosphate reductase from Bacteroides fragilis (strain ATCC 25285 / DSM 2151 / CCUG 4856 / JCM 11019 / LMG 10263 / NCTC 9343 / Onslow / VPI 2553 / EN-2).